A 164-amino-acid polypeptide reads, in one-letter code: Phosphopantetheine adenylyltransferase (164 aa).

S10 is a substrate binding site. ATP contacts are provided by residues 10–11 (SF) and H18. The substrate site is built by K42, M74, and R88. ATP-binding positions include 89–91 (GLR), E99, and 124–130 (YFFVSAR).

The protein belongs to the bacterial CoaD family. In terms of assembly, homohexamer. Requires Mg(2+) as cofactor.

The protein resides in the cytoplasm. The catalysed reaction is (R)-4'-phosphopantetheine + ATP + H(+) = 3'-dephospho-CoA + diphosphate. The protein operates within cofactor biosynthesis; coenzyme A biosynthesis; CoA from (R)-pantothenate: step 4/5. Functionally, reversibly transfers an adenylyl group from ATP to 4'-phosphopantetheine, yielding dephospho-CoA (dPCoA) and pyrophosphate. This Anaeromyxobacter dehalogenans (strain 2CP-C) protein is Phosphopantetheine adenylyltransferase.